Consider the following 43-residue polypeptide: Photosystem II reaction center protein K (43 aa).

The propeptide occupies 1–6 (MSLLLA). A helical membrane pass occupies residues 18–38 (IVDVLPIIPVLFLLLAFVWQA).

The protein belongs to the PsbK family. As to quaternary structure, PSII is composed of 1 copy each of membrane proteins PsbA, PsbB, PsbC, PsbD, PsbE, PsbF, PsbH, PsbI, PsbJ, PsbK, PsbL, PsbM, PsbT, PsbX, PsbY, PsbZ, Psb30/Ycf12, at least 3 peripheral proteins of the oxygen-evolving complex and a large number of cofactors. It forms dimeric complexes.

It localises to the plastid. The protein resides in the chloroplast thylakoid membrane. In terms of biological role, one of the components of the core complex of photosystem II (PSII). PSII is a light-driven water:plastoquinone oxidoreductase that uses light energy to abstract electrons from H(2)O, generating O(2) and a proton gradient subsequently used for ATP formation. It consists of a core antenna complex that captures photons, and an electron transfer chain that converts photonic excitation into a charge separation. This Oltmannsiellopsis viridis (Marine flagellate) protein is Photosystem II reaction center protein K.